A 122-amino-acid chain; its full sequence is Small ribosomal subunit protein uS13 (122 aa).

The interval 94-122 is disordered; the sequence is RGLPVRGQRTKTNARQRKGPRPAIGGRKK.

This sequence belongs to the universal ribosomal protein uS13 family. As to quaternary structure, part of the 30S ribosomal subunit. Forms a loose heterodimer with protein S19. Forms two bridges to the 50S subunit in the 70S ribosome.

Located at the top of the head of the 30S subunit, it contacts several helices of the 16S rRNA. In the 70S ribosome it contacts the 23S rRNA (bridge B1a) and protein L5 of the 50S subunit (bridge B1b), connecting the 2 subunits; these bridges are implicated in subunit movement. Contacts the tRNAs in the A and P-sites. This chain is Small ribosomal subunit protein uS13, found in Rubrobacter xylanophilus (strain DSM 9941 / JCM 11954 / NBRC 16129 / PRD-1).